The primary structure comprises 131 residues: Translation initiation factor 5A (131 aa).

Lys-36 carries the hypusine modification.

It belongs to the eIF-5A family.

The protein resides in the cytoplasm. Its function is as follows. Functions by promoting the formation of the first peptide bond. This chain is Translation initiation factor 5A, found in Sulfurisphaera tokodaii (strain DSM 16993 / JCM 10545 / NBRC 100140 / 7) (Sulfolobus tokodaii).